The primary structure comprises 284 residues: uncharacterized protein (284 aa).

Residues 9 to 28 form a helical membrane-spanning segment; it reads IILRWVVTLYIYGFILYQIT.

The protein localises to the membrane. This is an uncharacterized protein from Aquifex aeolicus (strain VF5).